The sequence spans 194 residues: Peptidyl-tRNA hydrolase (194 aa).

Y16 is a tRNA binding site. Catalysis depends on H21, which acts as the Proton acceptor. TRNA contacts are provided by F67, N69, and N115.

Belongs to the PTH family. In terms of assembly, monomer.

Its subcellular location is the cytoplasm. The catalysed reaction is an N-acyl-L-alpha-aminoacyl-tRNA + H2O = an N-acyl-L-amino acid + a tRNA + H(+). In terms of biological role, hydrolyzes ribosome-free peptidyl-tRNAs (with 1 or more amino acids incorporated), which drop off the ribosome during protein synthesis, or as a result of ribosome stalling. Functionally, catalyzes the release of premature peptidyl moieties from peptidyl-tRNA molecules trapped in stalled 50S ribosomal subunits, and thus maintains levels of free tRNAs and 50S ribosomes. The chain is Peptidyl-tRNA hydrolase from Escherichia coli O17:K52:H18 (strain UMN026 / ExPEC).